The following is a 158-amino-acid chain: uncharacterized protein (158 aa).

The N-terminal stretch at 1–19 (MQKLLLAVLFFSLLAIATA) is a signal peptide. The interval 82–158 (ANPKAEAEPG…VYENDDENEE (77 aa)) is disordered. Residues 84–107 (PKAEAEPGSLDKEAGTKGEKEKNG) show a composition bias toward basic and acidic residues. Residues 141–158 (DDDDDHDDVYENDDENEE) show a composition bias toward acidic residues.

As to expression, prismatic layer of shell (at protein level). Expressed primarily in the mantle with highest level in the mantle edge and lower level in the mantle pallium.

The protein localises to the secreted. This is an uncharacterized protein from Pinctada maxima (Silver-lipped pearl oyster).